The following is a 313-amino-acid chain: Pantothenate synthetase (313 aa).

Residue 43–50 (MGALHEGH) participates in ATP binding. H50 acts as the Proton donor in catalysis. Q75 lines the (R)-pantoate pocket. Beta-alanine is bound at residue Q75. 161-164 (GEKD) is a binding site for ATP. Q167 is a binding site for (R)-pantoate. Residues V190 and 198-201 (LSSR) each bind ATP.

The protein belongs to the pantothenate synthetase family. Homodimer.

The protein localises to the cytoplasm. It catalyses the reaction (R)-pantoate + beta-alanine + ATP = (R)-pantothenate + AMP + diphosphate + H(+). The protein operates within cofactor biosynthesis; (R)-pantothenate biosynthesis; (R)-pantothenate from (R)-pantoate and beta-alanine: step 1/1. Its function is as follows. Catalyzes the condensation of pantoate with beta-alanine in an ATP-dependent reaction via a pantoyl-adenylate intermediate. In Mycobacterium sp. (strain KMS), this protein is Pantothenate synthetase.